The following is a 453-amino-acid chain: Serine/threonine-protein phosphatase 2A 55 kDa regulatory subunit B delta isoform (453 aa).

WD repeat units lie at residues 32 to 71 (AEADIISTVEFNYSGDLLATGDKGGRVVIFQREQENKSRP), 97 to 138 (EIEE…KRAE), 181 to 219 (AHTYHINSISVNSDHETYLSADDLRINLWHLEITDRSFN), and 230 to 270 (ELTE…LCDR). S285 carries the post-translational modification Phosphoserine. 3 WD repeats span residues 289 to 327 (EIISSISDVKFSHSGRYMMTRDYLSVKVWDLNMESRPVE), 344 to 385 (ENDC…DVTL), and 420 to 452 (DFNKKILHTAWHPVDNVIAVAATNNLYIFQDKI). Y305 is subject to Phosphotyrosine. Phosphothreonine is present on T308.

It belongs to the phosphatase 2A regulatory subunit B family. As to quaternary structure, PP2A consists of a common heterodimeric core enzyme, composed of a 36 kDa catalytic subunit (subunit C) and a 65 kDa constant regulatory subunit (PR65 or subunit A), that associates with a variety of regulatory subunits. Proteins that associate with the core dimer include three families of regulatory subunits B (the R2/B/PR55/B55, R3/B''/PR72/PR130/PR59 and R5/B'/B56 families), the 48 kDa variable regulatory subunit, viral proteins, and cell signaling molecules. Interacts with ENSA (when phosphorylated at 'Ser-67') and ARPP19 (when phosphorylated at 'Ser-62'), leading to inhibit PP2A activity. Interacts with IER5.

It localises to the cytoplasm. Functionally, substrate-recognition subunit of protein phosphatase 2A (PP2A) that plays a key role in cell cycle by controlling mitosis entry and exit. Involved in chromosome clustering during late mitosis by mediating dephosphorylation of MKI67. The activity of PP2A complexes containing PPP2R2D (PR55-delta) fluctuate during the cell cycle: the activity is high in interphase and low in mitosis. The polypeptide is Serine/threonine-protein phosphatase 2A 55 kDa regulatory subunit B delta isoform (PPP2R2D) (Homo sapiens (Human)).